A 330-amino-acid polypeptide reads, in one-letter code: Phosphate acyltransferase (330 aa).

Belongs to the PlsX family. Homodimer. Probably interacts with PlsY.

The protein resides in the cytoplasm. The catalysed reaction is a fatty acyl-[ACP] + phosphate = an acyl phosphate + holo-[ACP]. The protein operates within lipid metabolism; phospholipid metabolism. Functionally, catalyzes the reversible formation of acyl-phosphate (acyl-PO(4)) from acyl-[acyl-carrier-protein] (acyl-ACP). This enzyme utilizes acyl-ACP as fatty acyl donor, but not acyl-CoA. The protein is Phosphate acyltransferase of Bacillus cereus (strain G9842).